The primary structure comprises 152 residues: SsrA-binding protein (152 aa).

The protein belongs to the SmpB family.

The protein localises to the cytoplasm. Required for rescue of stalled ribosomes mediated by trans-translation. Binds to transfer-messenger RNA (tmRNA), required for stable association of tmRNA with ribosomes. tmRNA and SmpB together mimic tRNA shape, replacing the anticodon stem-loop with SmpB. tmRNA is encoded by the ssrA gene; the 2 termini fold to resemble tRNA(Ala) and it encodes a 'tag peptide', a short internal open reading frame. During trans-translation Ala-aminoacylated tmRNA acts like a tRNA, entering the A-site of stalled ribosomes, displacing the stalled mRNA. The ribosome then switches to translate the ORF on the tmRNA; the nascent peptide is terminated with the 'tag peptide' encoded by the tmRNA and targeted for degradation. The ribosome is freed to recommence translation, which seems to be the essential function of trans-translation. In Helicobacter pylori (strain HPAG1), this protein is SsrA-binding protein.